Reading from the N-terminus, the 606-residue chain is MKKIQQLLMLSLISSTLIACGGGGGGGSTPTTSSSPQSSSPASTPSSASSSSIISSSSLSSSLSSSSLSSSSLSSSSASSVSSSSVAASEGNVVIEVDMANGWRGNASGSTSHSGITYSADGVTFAALGDGVGAVFDIARPTTLEDAVIAMVVNVSAEFKASEANLQIFAQLKEDWSKGEWDCLAASSELTADTDLTLTCTIDEDDDKFNQTARDVQVGIQAKGTPAGTITIKSVTITLAQEAYSANVDHLRDLAPSDFPIGVAVSNTDSATYNLLTNSREQAVVKKHFNHLTAGNIMKMSYMQPTEGNFNFTNADAFVDWATENNMTVHGHALVWHSDYQVPNFMKNWAGSAEDFLAALDTHITTIVDHYEAKGNLVSWDVVNEAIDDNSPANFRTTDSAFYVKSGNSSVYIERAFQTARAADPAVILYYNDYNIEQNNAKTTKMVDMVKDFQARSIPIDGVGFQMHVCMNYPSIANISAAMKKVVDLGLLVKITELDVAVNQPHCDAYPANKINPLTEAAQLAQKKRYCDVVKAYLDTVPVNQRGGISVWGTTDANTWLDGLYREQFEDEKISWPLLFDNNYNDKPALRGFADALIGTQCTNTH.

Positions 1–19 are cleaved as a signal peptide; the sequence is MKKIQQLLMLSLISSTLIA. C20 carries N-palmitoyl cysteine lipidation. Residue C20 is the site of S-diacylglycerol cysteine attachment. The interval 23-64 is disordered; sequence GGGGGSTPTTSSSPQSSSPASTPSSASSSSIISSSSLSSSLS. Residues 29 to 64 show a composition bias toward low complexity; it reads TPTTSSSPQSSSPASTPSSASSSSIISSSSLSSSLS. One can recognise a CBM15 domain in the interval 91–242; the sequence is GNVVIEVDMA…KSVTITLAQE (152 aa). A carbohydrate is bound by residues N106 and Q171. C183 and C200 form a disulfide bridge. Q217 provides a ligand contact to a carbohydrate. A GH10 domain is found at 245–596; it reads SANVDHLRDL…KPALRGFADA (352 aa). Residues 296 to 299, H332, and N384 contribute to the substrate site; that span reads NIMK. E385 (proton donor) is an active-site residue. Residue E497 is the Nucleophile of the active site. Residue W552 coordinates substrate.

This sequence belongs to the glycosyl hydrolase 10 (cellulase F) family.

The protein localises to the cell outer membrane. It catalyses the reaction Endohydrolysis of (1-&gt;4)-beta-D-xylosidic linkages in xylans.. It functions in the pathway glycan degradation; xylan degradation. Endo-acting xylanase which specifically cleaves internal linkages on the xylan backbone, releasing xylooligosaccharides. Is able to hydrolyze oat spelt xylan, the arabinoxylans from wheat and rye, and glucuronoxylan. Also displays very low activity against xylooligosaccharides. During the xylan degradation process, Xyn10C may act on the soluble xylans and long xylooligosaccharides products released by the secreted xylanases Xyn11A, Xyn11B and Xyn10A. This is Endo-beta-1,4-xylanase Xyn10C (xyn10C) from Cellvibrio japonicus (Pseudomonas fluorescens subsp. cellulosa).